We begin with the raw amino-acid sequence, 276 residues long: Glucosamine-6-phosphate deaminase 2 (276 aa).

The Proton acceptor; for enolization step role is filled by aspartate 72. Residues 106–130 are a coiled coil; sequence ILDGNATDLQAECDAFEKKIKEAGG. Aspartate 141 serves as the catalytic For ring-opening step. The active-site Proton acceptor; for ring-opening step is the histidine 143. Glutamate 148 (for ring-opening step) is an active-site residue. A Phosphothreonine modification is found at threonine 161.

This sequence belongs to the glucosamine/galactosamine-6-phosphate isomerase family. Homohexamer.

It localises to the cytoplasm. It catalyses the reaction alpha-D-glucosamine 6-phosphate + H2O = beta-D-fructose 6-phosphate + NH4(+). It functions in the pathway nucleotide-sugar biosynthesis; UDP-N-acetyl-alpha-D-glucosamine biosynthesis; alpha-D-glucosamine 6-phosphate from D-fructose 6-phosphate: step 1/1. Its activity is regulated as follows. Allosterically activated by N-acetylglucosamine-6-phosphate (GlcNAc6P). Its function is as follows. Catalyzes the reversible conversion of alpha-D-glucosamine 6-phosphate (GlcN-6P) into beta-D-fructose 6-phosphate (Fru-6P) and ammonium ion, a regulatory reaction step in de novo uridine diphosphate-N-acetyl-alpha-D-glucosamine (UDP-GlcNAc) biosynthesis via hexosamine pathway. Deamination is coupled to aldo-keto isomerization mediating the metabolic flux from UDP-GlcNAc toward Fru-6P. At high ammonium level can drive amination and isomerization of Fru-6P toward hexosamines and UDP-GlcNAc synthesis. Has a role in fine tuning the metabolic fluctuations of cytosolic UDP-GlcNAc and their effects on hyaluronan synthesis that occur during tissue remodeling. This chain is Glucosamine-6-phosphate deaminase 2, found in Bos taurus (Bovine).